Reading from the N-terminus, the 324-residue chain is MNDMSSDGKKVKSLSDLPGVGQSILNKLIEAGYSSLEAVAVASPQDLSVAAGIPLTTAQRIIKEAREALDIRFKTALEVKKERINTKKITTGSQALDGLLGGGIETRTMTELFGEFGSGKTQLCHQLSVNVQLPLEKGGLGGKAVYIDTEGTFRWERIEAMSKAIGLEPDSAMNNIYYMRAINSDHQMAIVDDLQELISKDPAIKLVIVDSVTSHFRAEFPGRENLAVRQQKLNKHLHQLVRLAEMYDLAVIITNQVMARPDMFYGDPTVAVGGHTLYHVPGIRVQLKKSRGNKRIARIVDAPHLPEGEVVFAITEEGVRDAEE.

114–121 (GEFGSGKT) is a binding site for ATP.

Belongs to the eukaryotic RecA-like protein family.

Functionally, involved in DNA repair and in homologous recombination. Binds and assemble on single-stranded DNA to form a nucleoprotein filament. Hydrolyzes ATP in a ssDNA-dependent manner and promotes DNA strand exchange between homologous DNA molecules. This Sulfurisphaera tokodaii (strain DSM 16993 / JCM 10545 / NBRC 100140 / 7) (Sulfolobus tokodaii) protein is DNA repair and recombination protein RadA.